A 304-amino-acid polypeptide reads, in one-letter code: Pseudouridine-5'-phosphate glycosidase (304 aa).

Glu25 functions as the Proton donor in the catalytic mechanism. The substrate site is built by Lys86 and Val106. Asp138 provides a ligand contact to Mn(2+). 140 to 142 (SAD) is a substrate binding site. The active-site Nucleophile is Lys159.

The protein belongs to the pseudouridine-5'-phosphate glycosidase family. Homotrimer. Requires Mn(2+) as cofactor.

It catalyses the reaction D-ribose 5-phosphate + uracil = psi-UMP + H2O. Functionally, catalyzes the reversible cleavage of pseudouridine 5'-phosphate (PsiMP) to ribose 5-phosphate and uracil. Functions biologically in the cleavage direction, as part of a pseudouridine degradation pathway. The chain is Pseudouridine-5'-phosphate glycosidase from Lysinibacillus sphaericus (strain C3-41).